The chain runs to 1154 residues: Caspase recruitment domain-containing protein 11 (1154 aa).

A CARD domain is found at 18–110 (EEDALWENVE…ELYKLVTGKE (93 aa)). Residues 111–128 (PTRRFSTIVVEEGHEGLT) are linker. Residues 130–449 (FLMNEVIKLQ…KDSNNLDQSL (320 aa)) adopt a coiled-coil conformation. Serine 448 and serine 466 each carry phosphoserine. The inhibitory domain (ID) stretch occupies residues 450 to 666 (PRNLPVTIIS…GHVRGPGPSV (217 aa)). The tract at residues 460-626 (QDFGDASPRT…HSSSSSHQSE (167 aa)) is disordered. Residues 473-484 (EADDSSTSEESP) show a composition bias toward acidic residues. Position 512 is a phosphoserine (serine 512). A compositionally biased stretch (basic and acidic residues) spans 518–529 (RTSDFQAKGHEE). Over residues 534–562 (ASPSSCGSLPITNSFTKMQPPRSRSSIMS) the composition is skewed to polar residues. Residue serine 535 is modified to Phosphoserine. Phosphoserine; by PKC/PRKCB and PKC/PRKCQ is present on serine 559. Over residues 573–587 (IVRRYKEDAPHRSTV) the composition is skewed to basic and acidic residues. A Phosphoserine modification is found at serine 593. Positions 614–625 (SSIHSSSSSHQS) are enriched in low complexity. Serine 644 and serine 652 each carry phosphoserine; by PKC/PRKCB and PKC/PRKCQ. The PDZ domain maps to 667 to 755 (QHTTLNGDSL…PVTLHYKVNH (89 aa)). Residues serine 886 and serine 925 each carry the phosphoserine modification. The 168-residue stretch at 973–1140 (RRRPVLFTPT…LLRVVKDKIG (168 aa)) folds into the Guanylate kinase-like domain.

In terms of assembly, homodimer; disulfide-linked. Homomultimer; polymerizes following activation, forming a nucleating helical template that seeds BCL10-filament formation via a CARD-CARD interaction. Interacts (via CARD domain) with BCL10 (via CARD domain); interaction takes place following CARD11 activation and polymerization, leading to the formation of a filamentous CBM complex assembly. Component of a CBM complex (CARD11-BCL10-MALT1) complex involved in NF-kappa-B activation. Found in a membrane raft complex, at least composed of BCL10, CARD11, DPP4 and IKBKB. Interacts (via PDZ domain) with DPP4 (via cytoplasmic tail). Post-translationally, phosphorylation at Ser-559, Ser-644 and Ser-652 by PRKCB and PRKCQ leads to a shift from an inactive to an active form that activates the NF-kappa-B signaling. In terms of tissue distribution, detected in adult peripheral blood leukocytes, thymus, spleen and liver. Also found in promyelocytic leukemia HL-60 cells, chronic myelogenous leukemia K-562 cells, Burkitt's lymphoma Raji cells and colorectal adenocarcinoma SW480 cells. Not detected in HeLaS3, MOLT-4, A-549 and G431 cells.

Its subcellular location is the cytoplasm. The protein resides in the membrane raft. Maintained in an autoinhibited state via homodimerization in which the CARD domain forms an extensive interaction with the adjacent linker and coiled-coil regions. Activation downstream of T-cell receptor (TCR) by phosphorylation by PRKCB and PRKCQ triggers CARD11 homooligomerization and BCL10 recruitment, followed by activation of NF-kappa-B. In terms of biological role, adapter protein that plays a key role in adaptive immune response by transducing the activation of NF-kappa-B downstream of T-cell receptor (TCR) and B-cell receptor (BCR) engagement. Transduces signals downstream TCR or BCR activation via the formation of a multiprotein complex together with BCL10 and MALT1 that induces NF-kappa-B and MAP kinase p38 (MAPK11, MAPK12, MAPK13 and/or MAPK14) pathways. Upon activation in response to TCR or BCR triggering, CARD11 homooligomerizes to form a nucleating helical template that recruits BCL10 via CARD-CARD interaction, thereby promoting polymerization of BCL10 and subsequent recruitment of MALT1: this leads to I-kappa-B kinase (IKK) phosphorylation and degradation, and release of NF-kappa-B proteins for nuclear translocation. Its binding to DPP4 induces T-cell proliferation and NF-kappa-B activation in a T-cell receptor/CD3-dependent manner. Promotes linear ubiquitination of BCL10 by promoting the targeting of BCL10 to RNF31/HOIP. Stimulates the phosphorylation of BCL10. Also activates the TORC1 signaling pathway. The chain is Caspase recruitment domain-containing protein 11 from Homo sapiens (Human).